The sequence spans 84 residues: Large ribosomal subunit protein uL23 (84 aa).

It belongs to the universal ribosomal protein uL23 family. In terms of assembly, part of the 50S ribosomal subunit. Contacts protein L29.

Binds to 23S rRNA. One of the proteins that surrounds the polypeptide exit tunnel on the outside of the ribosome. This chain is Large ribosomal subunit protein uL23, found in Haloquadratum walsbyi (strain DSM 16790 / HBSQ001).